The primary structure comprises 37 residues: Cytochrome b6-f complex subunit 5 (37 aa).

A helical transmembrane segment spans residues 5 to 25; it reads FLFGIVLGLIPVTLAGLFVTA.

It belongs to the PetG family. As to quaternary structure, the 4 large subunits of the cytochrome b6-f complex are cytochrome b6, subunit IV (17 kDa polypeptide, PetD), cytochrome f and the Rieske protein, while the 4 small subunits are PetG, PetL, PetM and PetN. The complex functions as a dimer.

The protein localises to the plastid. The protein resides in the chloroplast thylakoid membrane. Functionally, component of the cytochrome b6-f complex, which mediates electron transfer between photosystem II (PSII) and photosystem I (PSI), cyclic electron flow around PSI, and state transitions. PetG is required for either the stability or assembly of the cytochrome b6-f complex. This Daucus carota (Wild carrot) protein is Cytochrome b6-f complex subunit 5.